A 652-amino-acid polypeptide reads, in one-letter code: Acetyl-coenzyme A synthetase (652 aa).

CoA contacts are provided by residues 193 to 196 (RRGK) and Thr-312. Residues 388-390 (GEP), 412-417 (DTWWQT), Asp-501, and Arg-516 each bind ATP. Ser-524 lines the CoA pocket. Residues Val-538, His-540, and Val-543 each coordinate Mg(2+). Lys-611 is modified (N6-acetyllysine).

Belongs to the ATP-dependent AMP-binding enzyme family. It depends on Mg(2+) as a cofactor. Acetylated. Deacetylation by the SIR2-homolog deacetylase activates the enzyme.

It carries out the reaction acetate + ATP + CoA = acetyl-CoA + AMP + diphosphate. Its function is as follows. Catalyzes the conversion of acetate into acetyl-CoA (AcCoA), an essential intermediate at the junction of anabolic and catabolic pathways. AcsA undergoes a two-step reaction. In the first half reaction, AcsA combines acetate with ATP to form acetyl-adenylate (AcAMP) intermediate. In the second half reaction, it can then transfer the acetyl group from AcAMP to the sulfhydryl group of CoA, forming the product AcCoA. This is Acetyl-coenzyme A synthetase from Streptomyces avermitilis (strain ATCC 31267 / DSM 46492 / JCM 5070 / NBRC 14893 / NCIMB 12804 / NRRL 8165 / MA-4680).